Reading from the N-terminus, the 344-residue chain is L-rhamnose-proton symporter (344 aa).

A run of 10 helical transmembrane segments spans residues 4 to 24 (AITMGIFWHLIGAASAACFYA), 38 to 58 (WSVGGIVSWLILPWTISALLL), 68 to 88 (FNLSTLLPVFLFGAMWGIGNI), 101 to 121 (MGIGIAIGITLIVGTLMTPII), 131 to 151 (TEGGHMTLLGVFVALIGVGIV), 175 to 195 (LLLAVMCGIFSAGMSFAMNAA), 214 to 234 (LPSYVVIMGGGALVNLGFCFI), 259 to 279 (ILLSALGGLMWYLQFFFYAWG), 290 to 310 (MSWMLHMSFYVLCGGLVGLVL), and 321 to 341 (VAVLSLGCVVIIIAANIVGLG).

It belongs to the L-rhamnose transporter (TC 2.A.7.6) family.

The protein localises to the cell inner membrane. The enzyme catalyses L-rhamnopyranose(in) + H(+)(in) = L-rhamnopyranose(out) + H(+)(out). Functionally, uptake of L-rhamnose across the cytoplasmic membrane with the concomitant transport of protons into the cell (symport system). The sequence is that of L-rhamnose-proton symporter from Salmonella typhi.